The sequence spans 205 residues: Histone H1, early embryonic (205 aa).

Disordered stretches follow at residues 1–21 and 94–205; these read MAEK…HPPA and AKAQ…AKSK. The 75-residue stretch at 17 to 91 folds into the H15 domain; the sequence is AHPPAAEMVA…GASGSFKVNV (75 aa). A compositionally biased stretch (basic and acidic residues) spans 98–124; that stretch reads ASEKAKKEKEKAKLLAQREKAKEKGCS. 2 stretches are compositionally biased toward basic residues: residues 135–150 and 157–205; these read PKKV…KPVK and EKKK…AKSK.

It belongs to the histone H1/H5 family.

Its subcellular location is the nucleus. It is found in the chromosome. Histones H1 are necessary for the condensation of nucleosome chains into higher-order structures. The sequence is that of Histone H1, early embryonic from Strongylocentrotus purpuratus (Purple sea urchin).